A 203-amino-acid polypeptide reads, in one-letter code: ATP-dependent Clp protease proteolytic subunit (203 aa).

Catalysis depends on S107, which acts as the Nucleophile. H132 is an active-site residue.

It belongs to the peptidase S14 family. Fourteen ClpP subunits assemble into 2 heptameric rings which stack back to back to give a disk-like structure with a central cavity, resembling the structure of eukaryotic proteasomes.

It localises to the cytoplasm. The enzyme catalyses Hydrolysis of proteins to small peptides in the presence of ATP and magnesium. alpha-casein is the usual test substrate. In the absence of ATP, only oligopeptides shorter than five residues are hydrolyzed (such as succinyl-Leu-Tyr-|-NHMec, and Leu-Tyr-Leu-|-Tyr-Trp, in which cleavage of the -Tyr-|-Leu- and -Tyr-|-Trp bonds also occurs).. In terms of biological role, cleaves peptides in various proteins in a process that requires ATP hydrolysis. Has a chymotrypsin-like activity. Plays a major role in the degradation of misfolded proteins. In Shewanella halifaxensis (strain HAW-EB4), this protein is ATP-dependent Clp protease proteolytic subunit.